A 612-amino-acid chain; its full sequence is PAN2-PAN3 deadenylation complex subunit PAN3 (612 aa).

The C3H1-type zinc-finger motif lies at Trp10–Pro39. The span at Ser44 to Gly62 shows a compositional bias: low complexity. The disordered stretch occupies residues Ser44–Thr64. 2 short sequence motifs (PABPC-interacting motif-2 (PAM-2)) span residues Ser84–Ser104 and Thr111–Val131. The tract at residues Gln231 to Ser481 is pseudokinase domain. Residues Arg286, Asp336–Ser343, and Asp389–Lys390 contribute to the ATP site. Residues His482–Phe520 are a coiled coil. The segment at Ile521–Gln612 is knob domain.

This sequence belongs to the protein kinase superfamily. PAN3 family. As to quaternary structure, homodimer. Forms a heterotrimer with a catalytic subunit PAN2 to form the poly(A)-nuclease (PAN) deadenylation complex. Interacts (via PAM-2 motif) with poly(A)-binding protein PAB1 (via PABC domain), conferring substrate specificity of the enzyme complex.

The protein localises to the cytoplasm. Its function is as follows. Regulatory subunit of the poly(A)-nuclease (PAN) deadenylation complex, one of two cytoplasmic mRNA deadenylases involved in mRNA turnover. PAN specifically shortens poly(A) tails of RNA and the activity is stimulated by poly(A)-binding protein PAB1. PAN deadenylation is followed by rapid degradation of the shortened mRNA tails by the CCR4-NOT complex. Deadenylated mRNAs are then degraded by two alternative mechanisms, namely exosome-mediated 3'-5' exonucleolytic degradation, or deadenylation-dependent mRNA decaping and subsequent 5'-3' exonucleolytic degradation by XRN1. May also be involved in post-transcriptional maturation of mRNA poly(A) tails. PAN3 acts as a positive regulator for PAN activity, recruiting the catalytic subunit PAN2 to mRNA via its interaction with RNA and with PAB1. This Eremothecium gossypii (strain ATCC 10895 / CBS 109.51 / FGSC 9923 / NRRL Y-1056) (Yeast) protein is PAN2-PAN3 deadenylation complex subunit PAN3.